The following is an 883-amino-acid chain: Alanine--tRNA ligase (883 aa).

The Zn(2+) site is built by H560, H564, C665, and H669.

Belongs to the class-II aminoacyl-tRNA synthetase family. Zn(2+) is required as a cofactor.

The protein localises to the cytoplasm. The enzyme catalyses tRNA(Ala) + L-alanine + ATP = L-alanyl-tRNA(Ala) + AMP + diphosphate. Its function is as follows. Catalyzes the attachment of alanine to tRNA(Ala) in a two-step reaction: alanine is first activated by ATP to form Ala-AMP and then transferred to the acceptor end of tRNA(Ala). Also edits incorrectly charged Ser-tRNA(Ala) and Gly-tRNA(Ala) via its editing domain. The chain is Alanine--tRNA ligase from Mesomycoplasma hyopneumoniae (strain 232) (Mycoplasma hyopneumoniae).